Consider the following 334-residue polypeptide: MEGRHKEYRIRFSPGWVEVVQDDVTIPGRRALITGATGLLGRAVYKEFKENSWHVLGCGYSRARPRFEYLNLLDAAAVKALIQDFKPHVIIHCAAERRPDIVESQPEFASLLNVVASENLAKEAAGVGAFLIYVSSDYVFDGTSPPYREDSVPNPLNLYGKTKLEGERAVLHNNEGAAVLRVPVLYGDVEKLSESAVTILFDKVQFSNKSANMDHWQQRFPTYVKDVASVCLQLTERRLQDPSIKGIYHWSGNEQMTKYEMTCAMADAFNLPSSHLRPITDEPVGATPRPWNPQLDCSKLEKIGIGQRTPFRVGIRESLWPFLVDKRWRQTVFH.

Residues 37 to 40 (TGLL), 60 to 62 (YSR), 71 to 72 (NL), Cys93, Arg97, Tyr159, and Leu185 each bind NADP(+). Residues 319-334 (LWPFLVDKRWRQTVFH) form a required for interaction with MAT2A region.

This sequence belongs to the dTDP-4-dehydrorhamnose reductase family. MAT2B subfamily. In terms of assembly, heterotrimer; composed of a catalytic mat2a homodimer that binds one regulatory mat2b chain. Heterohexamer; composed of a central, catalytic mat2a homotetramer flanked on either side by a regulatory mat2b chain. NADP binding increases the affinity for mat2a.

Its pathway is amino-acid biosynthesis; S-adenosyl-L-methionine biosynthesis; S-adenosyl-L-methionine from L-methionine: step 1/1. In terms of biological role, regulatory subunit of S-adenosylmethionine synthetase 2, an enzyme that catalyzes the formation of S-adenosylmethionine from methionine and ATP. Regulates MAT2A catalytic activity by changing its kinetic properties, increasing its affinity for L-methionine. Can bind NADP (in vitro). The protein is Methionine adenosyltransferase 2 subunit beta (mat2b) of Xenopus tropicalis (Western clawed frog).